A 395-amino-acid polypeptide reads, in one-letter code: MSGLLVMPRILRCLNVSRISAILLRSCFLYGTFFGVITFRIERKDSQLVAINRRGYLWICLVIRLLASCFYGYSYDAWSGQYEDMYLRAFFGFRLIGCLICSVIILVMQFWFGEELINLVNRFLQLFRRMQSLTNSPKNRFGDRAEFLLMFSKVFSLLFVFMAFRLMLSPWFLLTLVCDLYTSVGTGMITHLCFVGYLSIGVLYRDLNNYVDCQLRAQLRSLNGENNSFRNNPQPTRQAISNLDKCLYLYDEIHQVSRSFQQLFDLPLFLSLAQSLLAMSMVSYHAILRRQYSFNLWGLVIKLLIDVVLLTMSVHSAVNGSRLIRRLSFENFYVTDSQSYHQKLELFLGRLQHQELRVFPLGLFEVSNELTLFFLSAMVTYLVFLVQYGMQSQQI.

Over 1 to 18 (MSGLLVMPRILRCLNVSR) the chain is Cytoplasmic. The helical transmembrane segment at 19–39 (ISAILLRSCFLYGTFFGVITF) threads the bilayer. Over 40 to 89 (RIERKDSQLVAINRRGYLWICLVIRLLASCFYGYSYDAWSGQYEDMYLRA) the chain is Extracellular. The helical transmembrane segment at 90 to 110 (FFGFRLIGCLICSVIILVMQF) threads the bilayer. Over 111–153 (WFGEELINLVNRFLQLFRRMQSLTNSPKNRFGDRAEFLLMFSK) the chain is Cytoplasmic. Residues 154–174 (VFSLLFVFMAFRLMLSPWFLL) traverse the membrane as a helical segment. Residues 175-183 (TLVCDLYTS) are Extracellular-facing. A helical transmembrane segment spans residues 184-204 (VGTGMITHLCFVGYLSIGVLY). Residues 205-267 (RDLNNYVDCQ…RSFQQLFDLP (63 aa)) are Cytoplasmic-facing. The chain crosses the membrane as a helical span at residues 268 to 288 (LFLSLAQSLLAMSMVSYHAIL). Residues 289 to 293 (RRQYS) are Extracellular-facing. Residues 294 to 314 (FNLWGLVIKLLIDVVLLTMSV) form a helical membrane-spanning segment. The Cytoplasmic portion of the chain corresponds to 315–369 (HSAVNGSRLIRRLSFENFYVTDSQSYHQKLELFLGRLQHQELRVFPLGLFEVSNE). Residues 370 to 390 (LTLFFLSAMVTYLVFLVQYGM) traverse the membrane as a helical segment. The Extracellular portion of the chain corresponds to 391–395 (QSQQI).

Belongs to the insect chemoreceptor superfamily. Gustatory receptor (GR) family. Gr93a subfamily. In terms of tissue distribution, in larvae, is expressed in neurons of the terminal external chemosensory organ and of the dorsal pharyngeal sense organ.

Its subcellular location is the cell membrane. In terms of biological role, probable gustatory receptor which mediates acceptance or avoidance behavior, depending on its substrates. The protein is Putative gustatory receptor 93b (Gr93b) of Drosophila melanogaster (Fruit fly).